A 102-amino-acid polypeptide reads, in one-letter code: Small ribosomal subunit protein uS10 (102 aa).

Residues 33–59 (RMSGPIPLPTKRIRITTRKSPDGEGSA) form a disordered region.

Belongs to the universal ribosomal protein uS10 family. Part of the 30S ribosomal subunit.

Involved in the binding of tRNA to the ribosomes. The chain is Small ribosomal subunit protein uS10 from Pyrococcus furiosus (strain ATCC 43587 / DSM 3638 / JCM 8422 / Vc1).